Here is a 370-residue protein sequence, read N- to C-terminus: MKIKDAKKPSFPWFGMDIGGTLVKLSYFEPIDITAEEEQEEVESLKSIRKYLTSNVAYGSTGIRDVHLELKDLTLFGRRGNLHFIRFPTQDLPTFIQMGRDKNFSTLQTVLSATGGGAYKFEKDFRTIGNLHLHKLDELDCLVKGLLYIDSVSFNGQAECYYFANASEPERCQKMPFNLDDPYPLLVVNIGSGVSILAVHSKDNYKRVTGTSLGGGTFLGLCSLLTGCESFEEALEMASKGDSTQADRLVRDIYGGDYERFGLPGWAVASSFGNMIYKEKRETVSKEDLARATLVTITNNIGSVARMCAVNEKINRVVFVGNFLRVNTLSMKLLAYALDYWSKGQLKALFLEHEGYFGAVGALLGLPNFS.

Residue Glu138 is the Proton acceptor of the active site. Ser192, Ser195, and Arg207 together coordinate acetyl-CoA.

The protein belongs to the type II pantothenate kinase family. In terms of assembly, homodimer. In terms of tissue distribution, highly expressed in the liver.

It is found in the cytoplasm. It carries out the reaction (R)-pantothenate + ATP = (R)-4'-phosphopantothenate + ADP + H(+). It functions in the pathway cofactor biosynthesis; coenzyme A biosynthesis; CoA from (R)-pantothenate: step 1/5. Subject to allosteric regulation, exists in two distinct conformational states, a catalytically incompetent (or open) conformation stabilized by the binding of acetyl(acyl)-CoA, and a catalytically competent (or closed) conformation stabilized by ATP-binding. Acetyl-CoA and its thioesters act as allosteric inhibitors and compete with the ATP-binding site. Strongly inhibited by acetyl-CoA, malonyl-CoA and palmitoyl CoA and modestly inhibited by CoA. Inhibited by calcium hopantenate. Functionally, catalyzes the phosphorylation of pantothenate to generate 4'-phosphopantothenate in the first and rate-determining step of coenzyme A (CoA) synthesis. This Mus musculus (Mouse) protein is Pantothenate kinase 3 (Pank3).